Consider the following 850-residue polypeptide: DNA polymerase I (850 aa).

The region spanning 1-288 is the 5'-3' exonuclease domain; sequence MKLVIFDGNS…SIIKRLGLSE (288 aa). The polymerase stretch occupies residues 470–850; that stretch reads VDRDALIQYT…KEGLNWYETK (381 aa).

It belongs to the DNA polymerase type-A family.

The catalysed reaction is DNA(n) + a 2'-deoxyribonucleoside 5'-triphosphate = DNA(n+1) + diphosphate. In addition to polymerase activity, this DNA polymerase exhibits 3'-5' and 5'-3' exonuclease activity. This chain is DNA polymerase I (polA), found in Caldicellulosiruptor bescii (strain ATCC BAA-1888 / DSM 6725 / KCTC 15123 / Z-1320) (Anaerocellum thermophilum).